A 368-amino-acid chain; its full sequence is Phosphoserine aminotransferase (368 aa).

R44 is an L-glutamate binding site. Residues 78 to 79, W104, T157, D179, and Q202 contribute to the pyridoxal 5'-phosphate site; that span reads AT. An N6-(pyridoxal phosphate)lysine modification is found at K203. 244-245 lines the pyridoxal 5'-phosphate pocket; that stretch reads NT.

It belongs to the class-V pyridoxal-phosphate-dependent aminotransferase family. SerC subfamily. Homodimer. Pyridoxal 5'-phosphate is required as a cofactor.

Its subcellular location is the cytoplasm. The enzyme catalyses O-phospho-L-serine + 2-oxoglutarate = 3-phosphooxypyruvate + L-glutamate. The catalysed reaction is 4-(phosphooxy)-L-threonine + 2-oxoglutarate = (R)-3-hydroxy-2-oxo-4-phosphooxybutanoate + L-glutamate. The protein operates within amino-acid biosynthesis; L-serine biosynthesis; L-serine from 3-phospho-D-glycerate: step 2/3. It functions in the pathway cofactor biosynthesis; pyridoxine 5'-phosphate biosynthesis; pyridoxine 5'-phosphate from D-erythrose 4-phosphate: step 3/5. Its function is as follows. Catalyzes the reversible conversion of 3-phosphohydroxypyruvate to phosphoserine and of 3-hydroxy-2-oxo-4-phosphonooxybutanoate to phosphohydroxythreonine. This Neisseria meningitidis serogroup A / serotype 4A (strain DSM 15465 / Z2491) protein is Phosphoserine aminotransferase.